Consider the following 760-residue polypeptide: 5-methyltetrahydropteroyltriglutamate--homocysteine methyltransferase (760 aa).

5-methyltetrahydropteroyltri-L-glutamate contacts are provided by residues 17 to 20 and lysine 118; that span reads RELK. Residues 436 to 438 and glutamate 489 each bind L-homocysteine; that span reads IGS. L-methionine is bound by residues 436 to 438 and glutamate 489; that span reads IGS. Residues 520–521 and tryptophan 566 contribute to the 5-methyltetrahydropteroyltri-L-glutamate site; that span reads RC. Residue aspartate 604 participates in L-homocysteine binding. L-methionine is bound at residue aspartate 604. Glutamate 610 lines the 5-methyltetrahydropteroyltri-L-glutamate pocket. Zn(2+) contacts are provided by histidine 646, cysteine 648, and glutamate 670. The active-site Proton donor is the histidine 699. Cysteine 731 contributes to the Zn(2+) binding site.

The protein belongs to the vitamin-B12 independent methionine synthase family. Zn(2+) serves as cofactor.

It catalyses the reaction 5-methyltetrahydropteroyltri-L-glutamate + L-homocysteine = tetrahydropteroyltri-L-glutamate + L-methionine. It functions in the pathway amino-acid biosynthesis; L-methionine biosynthesis via de novo pathway; L-methionine from L-homocysteine (MetE route): step 1/1. Functionally, catalyzes the transfer of a methyl group from 5-methyltetrahydrofolate to homocysteine resulting in methionine formation. The protein is 5-methyltetrahydropteroyltriglutamate--homocysteine methyltransferase of Vibrio harveyi (Beneckea harveyi).